A 286-amino-acid chain; its full sequence is Release factor glutamine methyltransferase (286 aa).

Residues Asp136 and Asn179 each contribute to the S-adenosyl-L-methionine site. Substrate is bound at residue 179-182 (NPPY).

The protein belongs to the protein N5-glutamine methyltransferase family. PrmC subfamily.

It carries out the reaction L-glutaminyl-[peptide chain release factor] + S-adenosyl-L-methionine = N(5)-methyl-L-glutaminyl-[peptide chain release factor] + S-adenosyl-L-homocysteine + H(+). Methylates the class 1 translation termination release factors RF1/PrfA and RF2/PrfB on the glutamine residue of the universally conserved GGQ motif. The chain is Release factor glutamine methyltransferase from Borreliella burgdorferi (strain ATCC 35210 / DSM 4680 / CIP 102532 / B31) (Borrelia burgdorferi).